The primary structure comprises 207 residues: Outer-membrane lipoprotein LolB (207 aa).

Residues 1 to 21 (MPLPDFRFIRLLPLAALVLTA) form the signal peptide. Cys22 is lipidated: N-palmitoyl cysteine. Cys22 is lipidated: S-diacylglycerol cysteine.

The protein belongs to the LolB family. As to quaternary structure, monomer.

Its subcellular location is the cell outer membrane. Plays a critical role in the incorporation of lipoproteins in the outer membrane after they are released by the LolA protein. The protein is Outer-membrane lipoprotein LolB of Escherichia coli O6:K15:H31 (strain 536 / UPEC).